Consider the following 350-residue polypeptide: Anthranilate phosphoribosyltransferase (350 aa).

Residues Gly-94, 97-98 (GD), Thr-102, 104-107 (NIST), 122-130 (KHGNRSVSS), and Ser-134 contribute to the 5-phospho-alpha-D-ribose 1-diphosphate site. Gly-94 lines the anthranilate pocket. Ser-106 contacts Mg(2+). Anthranilate is bound at residue Asn-125. Arg-180 is a binding site for anthranilate. Mg(2+) is bound by residues Asp-239 and Glu-240.

Belongs to the anthranilate phosphoribosyltransferase family. In terms of assembly, homodimer. The cofactor is Mg(2+).

It catalyses the reaction N-(5-phospho-beta-D-ribosyl)anthranilate + diphosphate = 5-phospho-alpha-D-ribose 1-diphosphate + anthranilate. It functions in the pathway amino-acid biosynthesis; L-tryptophan biosynthesis; L-tryptophan from chorismate: step 2/5. In terms of biological role, catalyzes the transfer of the phosphoribosyl group of 5-phosphorylribose-1-pyrophosphate (PRPP) to anthranilate to yield N-(5'-phosphoribosyl)-anthranilate (PRA). The chain is Anthranilate phosphoribosyltransferase from Geotalea daltonii (strain DSM 22248 / JCM 15807 / FRC-32) (Geobacter daltonii).